The following is a 795-amino-acid chain: Histone acetyltransferase KAT2A (795 aa).

Residues 1-18 show a composition bias toward polar residues; sequence MADPAAQSSAQPRLQQAQ. Residues 1–55 are disordered; it reads MADPAAQSSAQPRLQQAQSSGPTGSNSNPGAGSSDPARPGLSQQQWSSQKKAQVR. Residues 19–34 show a composition bias toward low complexity; sequence SSGPTGSNSNPGAGSS. The N-acetyltransferase domain maps to 461-614; that stretch reads VIGNSLSQKS…GATLMECELN (154 aa). Residue Glu533 is the Proton donor/acceptor of the active site. Acetyl-CoA contacts are provided by residues 537 to 539, 544 to 550, and Tyr575; these read CAV and QVKGYGT. Succinyl-CoA is bound by residues 537–539, 544–550, and Tyr575; these read CAV and QVKGYGT. The tract at residues 597–606 is loop 3; the sequence is LGYIKDYEGA. The region spanning 686-790 is the Bromo domain; sequence KDPDLLYNML…KFFYFKLKEA (105 aa).

Belongs to the acetyltransferase family. GCN5 subfamily.

Its subcellular location is the nucleus. It is found in the chromosome. The protein localises to the cytoplasm. The protein resides in the cytoskeleton. It localises to the microtubule organizing center. Its subcellular location is the centrosome. It carries out the reaction L-lysyl-[histone] + acetyl-CoA = N(6)-acetyl-L-lysyl-[histone] + CoA + H(+). The enzyme catalyses L-lysyl-[protein] + acetyl-CoA = N(6)-acetyl-L-lysyl-[protein] + CoA + H(+). The catalysed reaction is succinyl-CoA + L-lysyl-[protein] = N(6)-succinyl-L-lysyl-[protein] + CoA + H(+). It catalyses the reaction glutaryl-CoA + L-lysyl-[protein] = N(6)-glutaryl-L-lysyl-[protein] + CoA + H(+). Protein lysine acyltransferase that can act as a acetyltransferase, glutaryltransferasesucc, succinyltransferase or malonyltransferase, depending on the context. Acts as a histone lysine succinyltransferase: catalyzes succinylation of histone H3 on 'Lys-79' (H3K79succ), with a maximum frequency around the transcription start sites of genes. Succinylation of histones gives a specific tag for epigenetic transcription activation. Association with the 2-oxoglutarate dehydrogenase complex, which provides succinyl-CoA, is required for histone succinylation. In different complexes, functions either as an acetyltransferase (HAT) or as a succinyltransferase: in the SAGA and ATAC complexes, acts as a histone acetyltransferase. Has significant histone acetyltransferase activity with core histones, but not with nucleosome core particles. Has a a strong preference for acetylation of H3 at 'Lys-9' (H3K9ac). Acetylation of histones gives a specific tag for epigenetic transcription activation. Also acetylates non-histone proteins, such as tbx5. Involved in heart and limb development by mediating acetylation of tbx5. Together with kat2b, required for growth and differentiation of craniofacial cartilage and bone by regulating acetylation of histone H3 at 'Lys-9' (H3K9ac). Also acts as a histone glutaryltransferase: catalyzes glutarylation of histone H4 on 'Lys-91' (H4K91glu), a mark that destabilizes nucleosomes by promoting dissociation of the H2A-H2B dimers from nucleosomes. This is Histone acetyltransferase KAT2A from Danio rerio (Zebrafish).